The primary structure comprises 62 residues: SPbeta prophage-derived uncharacterized protein YonU (62 aa).

Positions 1–32 (MEKKFLDAIQQLTKELEMLKKDIDSIKEATVR) form a coiled coil.

The protein is SPbeta prophage-derived uncharacterized protein YonU (yonU) of Bacillus subtilis (strain 168).